The chain runs to 77 residues: Probable Fe(2+)-trafficking protein (77 aa).

The protein belongs to the Fe(2+)-trafficking protein family.

In terms of biological role, could be a mediator in iron transactions between iron acquisition and iron-requiring processes, such as synthesis and/or repair of Fe-S clusters in biosynthetic enzymes. The chain is Probable Fe(2+)-trafficking protein from Baumannia cicadellinicola subsp. Homalodisca coagulata.